Consider the following 275-residue polypeptide: Dermonecrotic toxin LhSicTox-alphaIV2 (275 aa).

His-5 is an active-site residue. Mg(2+) is bound by residues Glu-25 and Asp-27. Catalysis depends on His-41, which acts as the Nucleophile. 2 cysteine pairs are disulfide-bonded: Cys-45-Cys-51 and Cys-47-Cys-192. A Mg(2+)-binding site is contributed by Asp-85.

Belongs to the arthropod phospholipase D family. Class II subfamily. Requires Mg(2+) as cofactor. In terms of tissue distribution, expressed by the venom gland.

The protein localises to the secreted. It carries out the reaction an N-(acyl)-sphingosylphosphocholine = an N-(acyl)-sphingosyl-1,3-cyclic phosphate + choline. The enzyme catalyses an N-(acyl)-sphingosylphosphoethanolamine = an N-(acyl)-sphingosyl-1,3-cyclic phosphate + ethanolamine. It catalyses the reaction a 1-acyl-sn-glycero-3-phosphocholine = a 1-acyl-sn-glycero-2,3-cyclic phosphate + choline. The catalysed reaction is a 1-acyl-sn-glycero-3-phosphoethanolamine = a 1-acyl-sn-glycero-2,3-cyclic phosphate + ethanolamine. Dermonecrotic toxins cleave the phosphodiester linkage between the phosphate and headgroup of certain phospholipids (sphingolipid and lysolipid substrates), forming an alcohol (often choline) and a cyclic phosphate. This toxin acts on sphingomyelin (SM). It may also act on ceramide phosphoethanolamine (CPE), lysophosphatidylcholine (LPC) and lysophosphatidylethanolamine (LPE), but not on lysophosphatidylserine (LPS), and lysophosphatidylglycerol (LPG). It acts by transphosphatidylation, releasing exclusively cyclic phosphate products as second products. Induces dermonecrosis, hemolysis, increased vascular permeability, edema, inflammatory response, and platelet aggregation. The chain is Dermonecrotic toxin LhSicTox-alphaIV2 from Loxosceles hirsuta (Recluse spider).